Consider the following 57-residue polypeptide: Mambaquaretin-4 (57 aa).

Residues 5–55 (CNLPVKPGPCSGFFSAFYYSQKTNKCHSFTYGGCRGNGNRFRTIEECRRTC) enclose the BPTI/Kunitz inhibitor domain. Cystine bridges form between C5–C55, C14–C38, and C30–C51.

The protein belongs to the venom Kunitz-type family. As to expression, expressed by the venom gland.

It is found in the secreted. Functionally, interacts with vasopressin V2 receptor (V2R/AVPR2), probably in a selective manner. Inhibits vasopressin binding human V2R in the nanomolar range (Ki=7.34 nM), and also potently inhibits vasopressin-induced cAMP production (IC(50)=26 nM). In vivo, intraperitoneal injection of this protein into rats increases diuresis by 8.6-fold, without any loss of electrolytes. The sequence is that of Mambaquaretin-4 from Dendroaspis viridis (Western green mamba).